Reading from the N-terminus, the 167-residue chain is MEASNKLAVLLLWLVMAAATAVHPSYSENSPQDYLTPQNSARAAVGVGPVTWSTKLQQFAEKYAAQRAGDCRLQHSGGPYGENIFWGSAGFDWKAVDAVRSWVDEKQWYNYATNSCAAGKVCGHYTQVVWRATTSIGCARVVCRDNRGVFIICNYEPRGNIAGMKPY.

A signal peptide spans 1 to 27 (MEASNKLAVLLLWLVMAAATAVHPSYS). The SCP domain occupies 37-155 (PQNSARAAVG…NRGVFIICNY (119 aa)). Disulfide bonds link Cys71–Cys143, Cys116–Cys122, and Cys138–Cys153.

This sequence belongs to the CRISP family.

Its function is as follows. Probably involved in the defense reaction of plants against pathogens. The chain is Pathogenesis-related protein PRMS (PRMS) from Zea mays (Maize).